A 166-amino-acid polypeptide reads, in one-letter code: 3-hydroxyacyl-[acyl-carrier-protein] dehydratase FabZ (166 aa).

His72 is an active-site residue.

The protein belongs to the thioester dehydratase family. FabZ subfamily.

It localises to the cytoplasm. It catalyses the reaction a (3R)-hydroxyacyl-[ACP] = a (2E)-enoyl-[ACP] + H2O. Involved in unsaturated fatty acids biosynthesis. Catalyzes the dehydration of short chain beta-hydroxyacyl-ACPs and long chain saturated and unsaturated beta-hydroxyacyl-ACPs. In Synechococcus sp. (strain JA-2-3B'a(2-13)) (Cyanobacteria bacterium Yellowstone B-Prime), this protein is 3-hydroxyacyl-[acyl-carrier-protein] dehydratase FabZ.